A 205-amino-acid polypeptide reads, in one-letter code: Nascent polypeptide-associated complex subunit alpha-like protein (205 aa).

2 disordered regions span residues methionine 1 to methionine 73 and lysine 137 to valine 166. The segment covering glutamate 20 to glutamate 29 has biased composition (basic and acidic residues). Acidic residues predominate over residues proline 30–glutamine 51. The segment covering glycine 56–glutamate 66 has biased composition (basic and acidic residues). One can recognise an NAC-A/B domain in the interval serine 63–leucine 128. The span at glutamine 155–glycine 165 shows a compositional bias: acidic residues. The 38-residue stretch at valine 166 to leucine 203 folds into the UBA domain.

It belongs to the NAC-alpha family.

May promote appropriate targeting of ribosome-nascent polypeptide complexes. The sequence is that of Nascent polypeptide-associated complex subunit alpha-like protein from Pinus taeda (Loblolly pine).